The primary structure comprises 179 residues: TPD1 protein homolog 1 (179 aa).

Positions 1–30 are cleaved as a signal peptide; that stretch reads MRMEHIYKFQHWLFFIGLGVLLSLSLSVKA.

This Arabidopsis thaliana (Mouse-ear cress) protein is TPD1 protein homolog 1.